The chain runs to 411 residues: Indian hedgehog protein (411 aa).

A signal peptide spans 1–27 (MSPARLRPRLHFCLVLLLLLVVPAAWG). Cys28 carries the N-palmitoyl cysteine lipid modification. Positions 94, 95, 100, 130, 131, 134, and 136 each coordinate Ca(2+). Zn(2+) contacts are provided by His145, Asp152, and His187. The Cholesterol glycine ester moiety is linked to residue Gly202. Asn282 carries an N-linked (GlcNAc...) asparagine glycan.

Belongs to the hedgehog family. Multimer. In terms of assembly, interacts with BOC and CDON. Interacts with PTCH1. Interacts with glypican GPC3. Post-translationally, cholesterylation is required for N-product targeting to lipid rafts and multimerization. The C-terminal domain displays an autoproteolysis activity and a cholesterol transferase activity. Both activities result in the cleavage of the full-length protein and covalent attachment of a cholesterol moiety to the C-terminal of the newly generated N-product. The N-product is the active species in both local and long-range signaling, whereas the C-product is degraded in the endoplasmic reticulum. In terms of processing, N-palmitoylation by HHAT of N-product is required for indian hedgehog protein N-product multimerization and full activity. In terms of tissue distribution, expressed in embryonic lung, and in adult kidney and liver.

It localises to the cell membrane. It is found in the endoplasmic reticulum membrane. Its subcellular location is the golgi apparatus membrane. The protein resides in the secreted. It carries out the reaction glycyl-L-cysteinyl-[protein] + cholesterol + H(+) = [protein]-C-terminal glycyl cholesterol ester + N-terminal L-cysteinyl-[protein]. Functionally, plays a role in embryonic morphogenesis; it is involved in the regulation of endochondral skeleton formation, and the development of retinal pigment epithelium (RPE), photoreceptors and periocular tissues. The C-terminal part of the indian hedgehog protein precursor displays an autoproteolysis and a cholesterol transferase activity. Both activities result in the cleavage of the full-length protein into two parts followed by the covalent attachment of a cholesterol moiety to the C-terminal of the newly generated N-product. Both activities occur in the endoplasmic reticulum. Plays a role in hedgehog paracrine signaling. Associated with the very-low-density lipoprotein (VLDL) particles to function as a circulating morphogen for endothelial cell integrity maintenance. In terms of biological role, the dually lipidated indian hedgehog protein N-product is a morphogen which is essential for a variety of patterning events during development. Binds to the patched (PTCH1) receptor, which functions in association with smoothened (SMO), to activate the transcription of target genes. Plays a role in morphogenesis of the skeleton by coordinating growth and differentiation of the endochondral skeleton. Positively regulates PTHLH expression during endochondral bone formation preventing chondrocyte hypertrophy. In contrast, participates in normal chondrocyte proliferation in a PTHLH-independent pathway. This is Indian hedgehog protein from Homo sapiens (Human).